We begin with the raw amino-acid sequence, 109 residues long: Small ribosomal subunit protein uS17 (109 aa).

Belongs to the universal ribosomal protein uS17 family. In terms of assembly, part of the 30S ribosomal subunit.

One of the primary rRNA binding proteins, it binds specifically to the 5'-end of 16S ribosomal RNA. This chain is Small ribosomal subunit protein uS17, found in Methanococcoides burtonii (strain DSM 6242 / NBRC 107633 / OCM 468 / ACE-M).